The following is a 253-amino-acid chain: Triosephosphate isomerase, cytosolic (253 aa).

The substrate site is built by Asn-10 and Lys-12. Residue His-96 is the Electrophile of the active site. The active-site Proton acceptor is Glu-166.

It belongs to the triosephosphate isomerase family. As to quaternary structure, homodimer.

The protein localises to the cytoplasm. It catalyses the reaction D-glyceraldehyde 3-phosphate = dihydroxyacetone phosphate. The protein operates within carbohydrate biosynthesis; gluconeogenesis. Its pathway is carbohydrate degradation; glycolysis; D-glyceraldehyde 3-phosphate from glycerone phosphate: step 1/1. This is Triosephosphate isomerase, cytosolic from Zea mays (Maize).